Here is a 161-residue protein sequence, read N- to C-terminus: SsrA-binding protein (161 aa).

Belongs to the SmpB family.

It is found in the cytoplasm. Required for rescue of stalled ribosomes mediated by trans-translation. Binds to transfer-messenger RNA (tmRNA), required for stable association of tmRNA with ribosomes. tmRNA and SmpB together mimic tRNA shape, replacing the anticodon stem-loop with SmpB. tmRNA is encoded by the ssrA gene; the 2 termini fold to resemble tRNA(Ala) and it encodes a 'tag peptide', a short internal open reading frame. During trans-translation Ala-aminoacylated tmRNA acts like a tRNA, entering the A-site of stalled ribosomes, displacing the stalled mRNA. The ribosome then switches to translate the ORF on the tmRNA; the nascent peptide is terminated with the 'tag peptide' encoded by the tmRNA and targeted for degradation. The ribosome is freed to recommence translation, which seems to be the essential function of trans-translation. The chain is SsrA-binding protein from Vibrio parahaemolyticus serotype O3:K6 (strain RIMD 2210633).